The primary structure comprises 228 residues: Sec-independent protein translocase protein TatB (228 aa).

A helical membrane pass occupies residues 1–21 (MFDFGLGELVFVGIIALIVLG). Disordered stretches follow at residues 138–162 (RSYASAETLGDSGQTGSTAEPAETD) and 195–228 (PVPHTTSLRKQAISRKRDLRPKSRAKPKLRVRKS). Positions 206–228 (AISRKRDLRPKSRAKPKLRVRKS) are enriched in basic residues.

Belongs to the TatB family. The Tat system comprises two distinct complexes: a TatABC complex, containing multiple copies of TatA, TatB and TatC subunits, and a separate TatA complex, containing only TatA subunits. Substrates initially bind to the TatABC complex, which probably triggers association of the separate TatA complex to form the active translocon.

It localises to the cell inner membrane. Its function is as follows. Part of the twin-arginine translocation (Tat) system that transports large folded proteins containing a characteristic twin-arginine motif in their signal peptide across membranes. Together with TatC, TatB is part of a receptor directly interacting with Tat signal peptides. TatB may form an oligomeric binding site that transiently accommodates folded Tat precursor proteins before their translocation. The polypeptide is Sec-independent protein translocase protein TatB (Neisseria meningitidis serogroup A / serotype 4A (strain DSM 15465 / Z2491)).